Reading from the N-terminus, the 300-residue chain is tRNA-cytidine(32) 2-sulfurtransferase (300 aa).

The PP-loop motif motif lies at 41–46 (SGGKDS). Cys-116, Cys-119, and Cys-207 together coordinate [4Fe-4S] cluster.

Belongs to the TtcA family. Homodimer. The cofactor is Mg(2+). Requires [4Fe-4S] cluster as cofactor.

Its subcellular location is the cytoplasm. It carries out the reaction cytidine(32) in tRNA + S-sulfanyl-L-cysteinyl-[cysteine desulfurase] + AH2 + ATP = 2-thiocytidine(32) in tRNA + L-cysteinyl-[cysteine desulfurase] + A + AMP + diphosphate + H(+). Its pathway is tRNA modification. In terms of biological role, catalyzes the ATP-dependent 2-thiolation of cytidine in position 32 of tRNA, to form 2-thiocytidine (s(2)C32). The sulfur atoms are provided by the cysteine/cysteine desulfurase (IscS) system. The polypeptide is tRNA-cytidine(32) 2-sulfurtransferase (Idiomarina loihiensis (strain ATCC BAA-735 / DSM 15497 / L2-TR)).